Here is a 424-residue protein sequence, read N- to C-terminus: Riboflavin biosynthesis protein RibBA (424 aa).

Residues 1–206 (MFTCEAGIAS…VDDLITYRYT (206 aa)) form a DHBP synthase region. D-ribulose 5-phosphate is bound by residues 32–33 (RE), aspartate 37, 145–149 (RPGHT), and glutamate 169. Glutamate 33 contributes to the Mg(2+) binding site. Residue histidine 148 participates in Mg(2+) binding. The interval 207-424 (YDSLVTKISS…YETVERMSCR (218 aa)) is GTP cyclohydrolase II. Position 257-261 (257-261 (RVHSE)) interacts with GTP. Positions 262, 273, and 275 each coordinate Zn(2+). GTP contacts are provided by residues glutamine 278, 301–303 (EGR), and threonine 323. The Proton acceptor; for GTP cyclohydrolase activity role is filled by aspartate 335. Residue arginine 337 is the Nucleophile; for GTP cyclohydrolase activity of the active site. Positions 358 and 363 each coordinate GTP.

The protein in the N-terminal section; belongs to the DHBP synthase family. It in the C-terminal section; belongs to the GTP cyclohydrolase II family. Mg(2+) serves as cofactor. Requires Mn(2+) as cofactor. The cofactor is Zn(2+).

The catalysed reaction is D-ribulose 5-phosphate = (2S)-2-hydroxy-3-oxobutyl phosphate + formate + H(+). It carries out the reaction GTP + 4 H2O = 2,5-diamino-6-hydroxy-4-(5-phosphoribosylamino)-pyrimidine + formate + 2 phosphate + 3 H(+). The protein operates within cofactor biosynthesis; riboflavin biosynthesis; 2-hydroxy-3-oxobutyl phosphate from D-ribulose 5-phosphate: step 1/1. It participates in cofactor biosynthesis; riboflavin biosynthesis; 5-amino-6-(D-ribitylamino)uracil from GTP: step 1/4. In terms of biological role, catalyzes the conversion of D-ribulose 5-phosphate to formate and 3,4-dihydroxy-2-butanone 4-phosphate. Catalyzes the conversion of GTP to 2,5-diamino-6-ribosylamino-4(3H)-pyrimidinone 5'-phosphate (DARP), formate and pyrophosphate. The polypeptide is Riboflavin biosynthesis protein RibBA (Chlamydia trachomatis serovar D (strain ATCC VR-885 / DSM 19411 / UW-3/Cx)).